Consider the following 456-residue polypeptide: Glycosyl hydrolase family 109 protein (456 aa).

Residues 1–31 constitute a signal peptide (tat-type signal); sequence MKLNRRHFLKTAGLSAAGILTSQLPLSSAEA. NAD(+) contacts are provided by residues 62 to 63, aspartate 84, 133 to 136, 153 to 154, and asparagine 182; these read QR, WEWH, and EV. Residues tyrosine 211, arginine 230, 242–245, and tyrosine 324 contribute to the substrate site; that span reads YPTH. Residue tyrosine 242 participates in NAD(+) binding.

The protein belongs to the Gfo/Idh/MocA family. Glycosyl hydrolase 109 subfamily. Requires NAD(+) as cofactor. In terms of processing, predicted to be exported by the Tat system. The position of the signal peptide cleavage has not been experimentally proven.

Functionally, glycosidase. The polypeptide is Glycosyl hydrolase family 109 protein (Shewanella pealeana (strain ATCC 700345 / ANG-SQ1)).